A 637-amino-acid chain; its full sequence is Threonine--tRNA ligase (637 aa).

The region spanning 1–61 (MIKITLKDGK…NEDSTLEILT (61 aa)) is the TGS domain. The tract at residues 242–532 (DHRKLGKELG…LTEHYAGAFP (291 aa)) is catalytic. Zn(2+) is bound by residues Cys333, His384, and His509.

Belongs to the class-II aminoacyl-tRNA synthetase family. In terms of assembly, homodimer. Zn(2+) is required as a cofactor.

Its subcellular location is the cytoplasm. It catalyses the reaction tRNA(Thr) + L-threonine + ATP = L-threonyl-tRNA(Thr) + AMP + diphosphate + H(+). Catalyzes the attachment of threonine to tRNA(Thr) in a two-step reaction: L-threonine is first activated by ATP to form Thr-AMP and then transferred to the acceptor end of tRNA(Thr). Also edits incorrectly charged L-seryl-tRNA(Thr). This Clostridium novyi (strain NT) protein is Threonine--tRNA ligase.